The chain runs to 181 residues: Adenylyl-sulfate kinase (181 aa).

ATP is bound at residue 13 to 20 (GVSGAGKS). The active-site Phosphoserine intermediate is the Ser-87.

This sequence belongs to the APS kinase family.

The catalysed reaction is adenosine 5'-phosphosulfate + ATP = 3'-phosphoadenylyl sulfate + ADP + H(+). It participates in sulfur metabolism; hydrogen sulfide biosynthesis; sulfite from sulfate: step 2/3. Its function is as follows. Catalyzes the synthesis of activated sulfate. The protein is Adenylyl-sulfate kinase of Burkholderia ambifaria (strain ATCC BAA-244 / DSM 16087 / CCUG 44356 / LMG 19182 / AMMD) (Burkholderia cepacia (strain AMMD)).